The chain runs to 218 residues: Redox-sensing transcriptional repressor Rex (218 aa).

Positions 25-64 (WYLSYVQLLHADGCESVSSTRIARAVGVDASLVAKDLSYV) form a DNA-binding region, H-T-H motif. 99–104 (GVGSLG) is an NAD(+) binding site.

Belongs to the transcriptional regulatory Rex family. As to quaternary structure, homodimer.

The protein localises to the cytoplasm. In terms of biological role, modulates transcription in response to changes in cellular NADH/NAD(+) redox state. The protein is Redox-sensing transcriptional repressor Rex of Porphyromonas gingivalis (strain ATCC 33277 / DSM 20709 / CIP 103683 / JCM 12257 / NCTC 11834 / 2561).